We begin with the raw amino-acid sequence, 981 residues long: Polyhomeotic-like protein 3 (981 aa).

A compositionally biased stretch (low complexity) spans 1 to 28 (MDSEPSSGTSVSTTASSTTTTTITTSSS). 4 disordered regions span residues 1 to 33 (MDSEPSSGTSVSTTASSTTTTTITTSSSRMQQP), 102 to 127 (LSSGRPSTSPTGSVTQQSSMSQTSIL), 224 to 280 (LSSS…TAVT), and 307 to 407 (QIPL…SQSP). The span at 224-255 (LSSSQNGSPKSAGQTQSLTICHNKTTVTSSKI) shows a compositional bias: polar residues. Phosphoserine is present on residues serine 231, serine 261, serine 269, and serine 312. Basic and acidic residues predominate over residues 256 to 266 (SQRDPSPESKK). Over residues 321–340 (QLLLQQQQQQIQPITLQSPS) the composition is skewed to low complexity. The span at 360–373 (APSNAQPQHCSPVQ) shows a compositional bias: polar residues. Over residues 381–395 (VSPNQAQSAQQSVVV) the composition is skewed to low complexity. 2 positions are modified to phosphothreonine: threonine 607 and threonine 612. The residue at position 614 (serine 614) is a Phosphoserine. The disordered stretch occupies residues 650–690 (KSPSDPTHASAPAPPLLIPAASTRSSSTSLASSTPSLENKP). Positions 667-686 (IPAASTRSSSTSLASSTPSL) are enriched in low complexity. Glycyl lysine isopeptide (Lys-Gly) (interchain with G-Cter in SUMO2) cross-links involve residues lysine 689 and lysine 730. The HD1 signature appears at 689-718 (KPPQAIVKPQILTHVIEGFVIQEGLEPFPV). Serine 759 and serine 760 each carry phosphoserine. The FCS-type zinc finger occupies 774–808 (EEMDSELLKCEFCGKMGYPNEFLRSKRFCTMSCAK). Positions 783, 786, 802, and 806 each coordinate Zn(2+). A Glycyl lysine isopeptide (Lys-Gly) (interchain with G-Cter in SUMO2) cross-link involves residue lysine 808. 2 disordered regions span residues 825–844 (RKPDNQSLGHRGRRPSGPEG) and 863–888 (EDVASHEDPVPSAMTTRLRRQSERER). An SAM domain is found at 917–981 (WTVDDVWAFI…CARINSLKDS (65 aa)).

In terms of assembly, component of a PRC1-like complex. Ubiquitous expression.

Its subcellular location is the nucleus. Functionally, component of a Polycomb group (PcG) multiprotein PRC1-like complex, a complex class required to maintain the transcriptionally repressive state of many genes, including Hox genes, throughout development. PcG PRC1 complex acts via chromatin remodeling and modification of histones; it mediates monoubiquitination of histone H2A 'Lys-119', rendering chromatin heritably changed in its expressibility. The chain is Polyhomeotic-like protein 3 (Phc3) from Mus musculus (Mouse).